A 347-amino-acid polypeptide reads, in one-letter code: S-adenosylmethionine:tRNA ribosyltransferase-isomerase (347 aa).

This sequence belongs to the QueA family. In terms of assembly, monomer.

The protein localises to the cytoplasm. It catalyses the reaction 7-aminomethyl-7-carbaguanosine(34) in tRNA + S-adenosyl-L-methionine = epoxyqueuosine(34) in tRNA + adenine + L-methionine + 2 H(+). It participates in tRNA modification; tRNA-queuosine biosynthesis. Functionally, transfers and isomerizes the ribose moiety from AdoMet to the 7-aminomethyl group of 7-deazaguanine (preQ1-tRNA) to give epoxyqueuosine (oQ-tRNA). The sequence is that of S-adenosylmethionine:tRNA ribosyltransferase-isomerase from Treponema denticola (strain ATCC 35405 / DSM 14222 / CIP 103919 / JCM 8153 / KCTC 15104).